The primary structure comprises 338 residues: MIQKNWQELIKPEKLQVNPGHDPKRFATVIAEPLERGFGMTLGNALRRILLSSLQGAAVTSIHIDGVLHEFSSIPGVREDVTDIILNVKDVAIRMQGDGPKRMVAKKTGPGVLLAGDIQTVGDVAILNPNLPICTLDEGAELRIEFTVDTGKGYVAADRNRPEDAPIGLIPIDSLYSPVRKVSYKVENTREGQILDYDKLTLQIETNGSITAEDALAYAARILQDQLEIFVNFEEPKRESETTAIQTLPFSPALLKKVDELELSVRSANCLKNDNIVYIGDLIQKSETEMLRTPNFGRKSLNEIKEVLASLGLHLGMEVPGWPPENIEELAKRFEEHY.

Residues 1-234 (MIQKNWQELI…DQLEIFVNFE (234 aa)) form an alpha N-terminal domain (alpha-NTD) region. An alpha C-terminal domain (alpha-CTD) region spans residues 250–338 (FSPALLKKVD…ELAKRFEEHY (89 aa)).

It belongs to the RNA polymerase alpha chain family. As to quaternary structure, homodimer. The RNAP catalytic core consists of 2 alpha, 1 beta, 1 beta' and 1 omega subunit. When a sigma factor is associated with the core the holoenzyme is formed, which can initiate transcription.

The enzyme catalyses RNA(n) + a ribonucleoside 5'-triphosphate = RNA(n+1) + diphosphate. Its function is as follows. DNA-dependent RNA polymerase catalyzes the transcription of DNA into RNA using the four ribonucleoside triphosphates as substrates. In Xanthobacter autotrophicus (strain ATCC BAA-1158 / Py2), this protein is DNA-directed RNA polymerase subunit alpha.